A 38-amino-acid polypeptide reads, in one-letter code: Photosystem II reaction center protein M (38 aa).

The helical transmembrane segment at 5–25 (ILGLIATALFIVIPTSFLLIL) threads the bilayer.

Belongs to the PsbM family. PSII is composed of 1 copy each of membrane proteins PsbA, PsbB, PsbC, PsbD, PsbE, PsbF, PsbH, PsbI, PsbJ, PsbK, PsbL, PsbM, PsbT, PsbX, PsbY, PsbZ, Psb30/Ycf12, at least 3 peripheral proteins of the oxygen-evolving complex and a large number of cofactors. It forms dimeric complexes.

The protein resides in the plastid. It is found in the cyanelle thylakoid membrane. Functionally, one of the components of the core complex of photosystem II (PSII). PSII is a light-driven water:plastoquinone oxidoreductase that uses light energy to abstract electrons from H(2)O, generating O(2) and a proton gradient subsequently used for ATP formation. It consists of a core antenna complex that captures photons, and an electron transfer chain that converts photonic excitation into a charge separation. This subunit is found at the monomer-monomer interface. The sequence is that of Photosystem II reaction center protein M from Cyanophora paradoxa.